The following is a 95-amino-acid chain: Aspartyl/glutamyl-tRNA(Asn/Gln) amidotransferase subunit C (95 aa).

Belongs to the GatC family. Heterotrimer of A, B and C subunits.

The catalysed reaction is L-glutamyl-tRNA(Gln) + L-glutamine + ATP + H2O = L-glutaminyl-tRNA(Gln) + L-glutamate + ADP + phosphate + H(+). It catalyses the reaction L-aspartyl-tRNA(Asn) + L-glutamine + ATP + H2O = L-asparaginyl-tRNA(Asn) + L-glutamate + ADP + phosphate + 2 H(+). Functionally, allows the formation of correctly charged Asn-tRNA(Asn) or Gln-tRNA(Gln) through the transamidation of misacylated Asp-tRNA(Asn) or Glu-tRNA(Gln) in organisms which lack either or both of asparaginyl-tRNA or glutaminyl-tRNA synthetases. The reaction takes place in the presence of glutamine and ATP through an activated phospho-Asp-tRNA(Asn) or phospho-Glu-tRNA(Gln). This Trichlorobacter lovleyi (strain ATCC BAA-1151 / DSM 17278 / SZ) (Geobacter lovleyi) protein is Aspartyl/glutamyl-tRNA(Asn/Gln) amidotransferase subunit C.